The chain runs to 859 residues: Rod cGMP-specific 3',5'-cyclic phosphodiesterase subunit alpha (859 aa).

Glycine 2 carries the post-translational modification N-acetylglycine. GAF domains lie at 73–222 (QAEK…NLIM) and 254–431 (DIER…GWSV). The PDEase domain occupies 483-816 (EEEELAEILQ…KEWKALADEY (334 aa)). Histidine 559 serves as the catalytic Proton donor. Residues histidine 563, histidine 599, aspartate 600, and aspartate 720 each coordinate a divalent metal cation. Residues 823 to 859 (LEEEKQKQQAAKQAASGNQPGGNPLQGAPASKSCCIQ) are disordered. Position 856 is a cysteine methyl ester (cysteine 856). Cysteine 856 carries S-farnesyl cysteine lipidation. Residues 857 to 859 (CIQ) constitute a propeptide, removed in mature form.

It belongs to the cyclic nucleotide phosphodiesterase family. Oligomer composed of two catalytic chains (alpha and beta), an inhibitory chain (gamma) and the delta chain. Requires a divalent metal cation as cofactor.

It localises to the cell membrane. It is found in the cell projection. The protein resides in the cilium. The protein localises to the photoreceptor outer segment. The catalysed reaction is 3',5'-cyclic GMP + H2O = GMP + H(+). Functionally, rod-specific cGMP phosphodiesterase that catalyzes the hydrolysis of 3',5'-cyclic GMP. This protein participates in processes of transmission and amplification of the visual signal. The chain is Rod cGMP-specific 3',5'-cyclic phosphodiesterase subunit alpha from Mus musculus (Mouse).